A 203-amino-acid polypeptide reads, in one-letter code: Urease accessory protein UreG (203 aa).

14 to 21 (GPVGSGKT) lines the GTP pocket.

It belongs to the SIMIBI class G3E GTPase family. UreG subfamily. In terms of assembly, homodimer. UreD, UreF and UreG form a complex that acts as a GTP-hydrolysis-dependent molecular chaperone, activating the urease apoprotein by helping to assemble the nickel containing metallocenter of UreC. The UreE protein probably delivers the nickel.

The protein localises to the cytoplasm. In terms of biological role, facilitates the functional incorporation of the urease nickel metallocenter. This process requires GTP hydrolysis, probably effectuated by UreG. This chain is Urease accessory protein UreG, found in Rhizobium leguminosarum bv. viciae.